An 894-amino-acid polypeptide reads, in one-letter code: Interleukin enhancer-binding factor 3 (894 aa).

Residues 5-378 enclose the DZF domain; sequence RIFVNDDRHV…PMKRPMEEDG (374 aa). A disordered region spans residues 50–86; that stretch reads DEQEKGSSEQAESDNMDVPPEDDSKEGAGEQKTEHMT. Residues 60–73 are compositionally biased toward acidic residues; that stretch reads AESDNMDVPPEDDS. Position 62 is a phosphoserine (serine 62). Residues 74–86 are compositionally biased toward basic and acidic residues; sequence KEGAGEQKTEHMT. N6-acetyllysine is present on lysine 100. Position 188 is a phosphothreonine; by PKR (threonine 188). Phosphoserine is present on serine 190. Residue lysine 297 forms a Glycyl lysine isopeptide (Lys-Gly) (interchain with G-Cter in ubiquitin) linkage. At threonine 315 the chain carries Phosphothreonine; by PKR. A Glycyl lysine isopeptide (Lys-Gly) (interchain with G-Cter in SUMO1) cross-link involves residue lysine 348. The segment at 363–401 is disordered; sequence TTYAITPMKRPMEEDGEEKSPSKKKKKIQKKEEKAEPPQ. The Bipartite nuclear localization signal motif lies at 371 to 389; that stretch reads KRPMEEDGEEKSPSKKKKK. The segment covering 372–383 has biased composition (basic and acidic residues); that stretch reads RPMEEDGEEKSP. 2 positions are modified to phosphoserine: serine 382 and serine 384. A Glycyl lysine isopeptide (Lys-Gly) (interchain with G-Cter in SUMO2) cross-link involves residue lysine 396. The region spanning 398 to 467 is the DRBM 1 domain; it reads EPPQAMNALM…AVKVLQDMGL (70 aa). Lysine 460 carries the N6-acetyllysine modification. Positions 466-524 are disordered; sequence GLPTGAEGRDSSKGEDSAEETEAKPAVVAPAPVVEAVSTPSAAFPSDATAEQGPILTKH. Residues 472-481 show a composition bias toward basic and acidic residues; it reads EGRDSSKGED. Serine 476, serine 477, and serine 482 each carry phosphoserine. Residue lysine 489 forms a Glycyl lysine isopeptide (Lys-Gly) (interchain with G-Cter in SUMO2) linkage. The span at 489 to 508 shows a compositional bias: low complexity; it reads KPAVVAPAPVVEAVSTPSAA. Residues 524 to 590 form the DRBM 2 domain; sequence HGKNPVMELN…ALAALEKLFP (67 aa). At threonine 592 the chain carries Phosphothreonine. The segment at 609–894 is interaction with PRMT1; sequence RGGPKFAAKP…ADHSMNYQYR (286 aa). Disordered regions lie at residues 625–660 and 718–894; these read MGGP…FGGA and QGDN…YQYR. Over residues 644 to 660 the composition is skewed to gly residues; it reads RGGSIRGRGRGRGFGGA. Low complexity-rich tracts occupy residues 743-770 and 777-792; these read PSYG…YGPP and YNHG…SYNS. Serine 792, serine 810, serine 812, and serine 816 each carry phosphoserine. 2 stretches are compositionally biased toward gly residues: residues 811–825 and 832–851; these read GSGG…GSGG and SHGG…GKQG. Residues 857–866 show a composition bias toward polar residues; it reads NYNSPGSGQN. Residues 867-878 are compositionally biased toward low complexity; it reads YSGPPSSYQSSQ.

As to quaternary structure, identified in a IGF2BP1-dependent mRNP granule complex containing untranslated mRNAs. Interacts with FUS and SMN. Interacts (via C-terminus) with PRMT1. Forms a complex with ILF2. Can also bind to PRKDC/XRCC7: this may stabilize the interaction of PRKDC/XRCC7 and the heterodimeric complex of XRCC6/KU70 and XRCC5/KU80. Forms a heteromeric complex with ZNF346 and ILF3. Found in a nuclear export complex with XPO5, ILF3, Ran and double-stranded RNA or double-stranded minihelix VA1 RNA. Found in a nuclear export complex with XPO5, RAN, ILF3, ZNF346 and double-stranded RNA. Interacts with XPO5 and ZNF346. Forms a complex with ILF2, YLPM1, KHDRBS1, RBMX, NCOA5 and PPP1CA. Interacts with AGO1 and AGO2. Interacts with DHX36; this interaction occurs in a RNA-dependent manner. Interacts with ELAVL1; this interaction occurs in a RNA-dependent manner. Interacts with HAVCR2; this interaction promotes ILF3 ubiquitination and subsequent degradation. In terms of processing, phosphorylated at Thr-188 and Thr-315 by PKR in response to certain RNA viruses. This phosphorylation results in the dissociation of ILF2 from the ILF2-ILF3 complex resulting in a cytoplasmic sequestration of ILF3 where it can bind to viral RNAs and impede viral replication. Post-translationally, methylated by protein arginine N-methyltransferase 1. Ubiquitinated at Lys-297 in a TRIM47-dependent manner; this 'Lys-48'-linked ubiquitination promotes ILF3 degradation. In terms of tissue distribution, ubiquitous.

The protein resides in the nucleus. The protein localises to the nucleolus. It localises to the cytoplasm. In terms of biological role, RNA-binding protein that plays an essential role in the biogenesis of circular RNAs (circRNAs) which are produced by back-splicing circularization of pre-mRNAs. Within the nucleus, promotes circRNAs processing by stabilizing the regulatory elements residing in the flanking introns of the circularized exons. Plays thereby a role in the back-splicing of a subset of circRNAs. As a consequence, participates in a wide range of transcriptional and post-transcriptional processes. Binds to poly-U elements and AU-rich elements (AREs) in the 3'-UTR of target mRNAs. Upon viral infection, ILF3 accumulates in the cytoplasm and participates in the innate antiviral response. Mechanistically, ILF3 becomes phosphorylated and activated by the double-stranded RNA-activated protein kinase/PKR which releases ILF3 from cellular mature circRNAs. In turn, unbound ILF3 molecules are able to interact with and thus inhibit viral mRNAs. (Microbial infection) Plays a positive role in HIV-1 virus production by binding to and thereby stabilizing HIV-1 RNA, together with ILF3. The sequence is that of Interleukin enhancer-binding factor 3 (ILF3) from Homo sapiens (Human).